A 189-amino-acid chain; its full sequence is Elongation factor P (189 aa).

K34 bears the N6-(3,6-diaminohexanoyl)-5-hydroxylysine mark.

The protein belongs to the elongation factor P family. May be beta-lysylated on the epsilon-amino group of Lys-34 by the combined action of EpmA and EpmB, and then hydroxylated on the C5 position of the same residue by EpmC (if this protein is present). Lysylation is critical for the stimulatory effect of EF-P on peptide-bond formation. The lysylation moiety may extend toward the peptidyltransferase center and stabilize the terminal 3-CCA end of the tRNA. Hydroxylation of the C5 position on Lys-34 may allow additional potential stabilizing hydrogen-bond interactions with the P-tRNA.

Its subcellular location is the cytoplasm. The protein operates within protein biosynthesis; polypeptide chain elongation. In terms of biological role, involved in peptide bond synthesis. Alleviates ribosome stalling that occurs when 3 or more consecutive Pro residues or the sequence PPG is present in a protein, possibly by augmenting the peptidyl transferase activity of the ribosome. Modification of Lys-34 is required for alleviation. This chain is Elongation factor P, found in Buchnera aphidicola subsp. Acyrthosiphon pisum (strain APS) (Acyrthosiphon pisum symbiotic bacterium).